The following is a 207-amino-acid chain: Guanylate kinase (207 aa).

The Guanylate kinase-like domain maps to 4–184 (GTLYIVSAPS…ALMDFKAILR (181 aa)). 11–18 (APSGAGKS) provides a ligand contact to ATP.

This sequence belongs to the guanylate kinase family.

It is found in the cytoplasm. The catalysed reaction is GMP + ATP = GDP + ADP. Its function is as follows. Essential for recycling GMP and indirectly, cGMP. This chain is Guanylate kinase, found in Vibrio parahaemolyticus serotype O3:K6 (strain RIMD 2210633).